Reading from the N-terminus, the 137-residue chain is Nucleoside diphosphate kinase (137 aa).

ATP contacts are provided by Lys-9, Phe-57, Arg-85, Thr-91, Arg-102, and Asn-112. The active-site Pros-phosphohistidine intermediate is the His-115.

Belongs to the NDK family. Homotetramer. The cofactor is Mg(2+).

It is found in the cytoplasm. It catalyses the reaction a 2'-deoxyribonucleoside 5'-diphosphate + ATP = a 2'-deoxyribonucleoside 5'-triphosphate + ADP. The catalysed reaction is a ribonucleoside 5'-diphosphate + ATP = a ribonucleoside 5'-triphosphate + ADP. Major role in the synthesis of nucleoside triphosphates other than ATP. The ATP gamma phosphate is transferred to the NDP beta phosphate via a ping-pong mechanism, using a phosphorylated active-site intermediate. This chain is Nucleoside diphosphate kinase, found in Desulfotalea psychrophila (strain LSv54 / DSM 12343).